Consider the following 325-residue polypeptide: Reaction center protein M chain (325 aa).

The next 3 membrane-spanning stretches (helical) occupy residues 54 to 80 (LGPL…LASV), 111 to 140 (NDGG…RARA), and 143 to 168 (MGTH…RPVL). (7R,8Z)-bacteriochlorophyll b-binding residues include His-183 and His-203. Residues 198 to 226 (FYNPFHALSIAFLYGATLLFAMHGATILA) traverse the membrane as a helical segment. Residues His-220 and Glu-235 each contribute to the Fe cation site. Residue Trp-253 participates in a ubiquinone binding. The helical transmembrane segment at 260 to 286 (NATTESIHRWAWWFAVLCPLCGGIGIL) threads the bilayer. His-267 lines the Fe cation pocket.

It belongs to the reaction center PufL/M/PsbA/D family. As to quaternary structure, reaction center is composed of four bacteriochlorophylls, two bacteriopheophytins, two ubiquinones, one iron, and three highly hydrophobic polypeptide chains (designated L, M, and H).

The protein localises to the cell inner membrane. Its function is as follows. The reaction center is a membrane-bound complex that mediates the initial photochemical event in the electron transfer process of photosynthesis. This is Reaction center protein M chain (pufM) from Rubrivivax gelatinosus (strain NBRC 100245 / IL144).